We begin with the raw amino-acid sequence, 148 residues long: uncharacterized protein (148 aa).

A signal peptide spans 1-16; it reads MDVLFIALLVAPLILG. N50 carries N-linked (GlcNAc...) asparagine glycosylation. The disordered stretch occupies residues 91 to 125; the sequence is MDPQNPVTTKPVTTEPVTTEPVTTEPQSPNQNDAM. The span at 96–116 shows a compositional bias: low complexity; sequence PVTTKPVTTEPVTTEPVTTEP.

It localises to the secreted. This is an uncharacterized protein from Mus musculus (Mouse).